The sequence spans 201 residues: Iron-sulfur flavoprotein AF_1896 (201 aa).

Residues C46, C49, C52, and C57 each contribute to the [4Fe-4S] cluster site.

It belongs to the SsuE family. Isf subfamily. In terms of assembly, homodimer. It depends on FMN as a cofactor. Requires [4Fe-4S] cluster as cofactor.

In terms of biological role, redox-active protein probably involved in electron transport. In Archaeoglobus fulgidus (strain ATCC 49558 / DSM 4304 / JCM 9628 / NBRC 100126 / VC-16), this protein is Iron-sulfur flavoprotein AF_1896.